A 427-amino-acid polypeptide reads, in one-letter code: uncharacterized protein (427 aa).

A run of 3 helical transmembrane segments spans residues 10–30, 43–63, and 71–91; these read LAYLVFESVLQVVIIALAGFW, KIISLLNVDLFTPCLIFSKLA, and IFEIAIIPIFFGLTTGISFIS. Thr199 is subject to Phosphothreonine. Ser234 carries the post-translational modification Phosphoserine. Transmembrane regions (helical) follow at residues 253-273, 288-308, 327-347, 358-378, and 397-417; these read NLNPPLYSMIFAVVVAAIGPL, FAEAVTQLGSVSIPLILVVLG, LLIGSIIGRMILPSCFLLPII, ILDDPIFLVVGFLLTVSPPAI, and ILFWGYAVLSLPVSIIVVSGA.

It belongs to the auxin efflux carrier (TC 2.A.69) family.

Its subcellular location is the membrane. This is an uncharacterized protein from Saccharomyces cerevisiae (strain ATCC 204508 / S288c) (Baker's yeast).